The sequence spans 128 residues: uncharacterized protein (128 aa).

Residues 1-11 are compositionally biased toward basic and acidic residues; it reads MDNKKKEENPS. A disordered region spans residues 1-40; the sequence is MDNKKKEENPSKSDTSISLPPSSTGEALQNYTESEWNASD. Over residues 12–37 the composition is skewed to polar residues; the sequence is KSDTSISLPPSSTGEALQNYTESEWN.

This is an uncharacterized protein from Caenorhabditis elegans.